Consider the following 825-residue polypeptide: Cytosolic phospholipase A2 delta (825 aa).

Positions 14-133 (SPERLHGHPY…LPGQLLQKTF (120 aa)) constitute a C2 domain. The Ca(2+) site is built by aspartate 47, aspartate 53, aspartate 103, aspartate 105, and aspartate 111. The PLA2c domain maps to 281–825 (DCCPKELSVR…SETRPLGVKT (545 aa)). 339–340 (GG) serves as a coordination point for substrate. Serine 370 (nucleophile) is an active-site residue. Catalysis depends on aspartate 654, which acts as the Proton acceptor.

It depends on Ca(2+) as a cofactor. As to expression, weakly or not expressed in most tissues. Detected in placenta of 17.5 dpc embryos.

It localises to the cytoplasm. The protein localises to the cytosol. It is found in the membrane. The catalysed reaction is a 1,2-diacyl-sn-glycero-3-phosphocholine + H2O = a 1-acyl-sn-glycero-3-phosphocholine + a fatty acid + H(+). It carries out the reaction 1-hexadecanoyl-2-(5Z,8Z,11Z,14Z-eicosatetraenoyl)-sn-glycero-3-phosphocholine + H2O = 1-hexadecanoyl-sn-glycero-3-phosphocholine + (5Z,8Z,11Z,14Z)-eicosatetraenoate + H(+). It catalyses the reaction 1-hexadecanoyl-2-(9Z,12Z-octadecadienoyl)-sn-glycero-3-phosphocholine + H2O = (9Z,12Z)-octadecadienoate + 1-hexadecanoyl-sn-glycero-3-phosphocholine + H(+). The enzyme catalyses 1-hexadecanoyl-2-(9Z-octadecenoyl)-sn-glycero-3-phosphocholine + H2O = 1-hexadecanoyl-sn-glycero-3-phosphocholine + (9Z)-octadecenoate + H(+). The catalysed reaction is 1-hexadecanoyl-2-(5Z,8Z,11Z,14Z-eicosatetraenoyl)-sn-glycero-3-phosphoethanolamine + H2O = 1-hexadecanoyl-sn-glycero-3-phosphoethanolamine + (5Z,8Z,11Z,14Z)-eicosatetraenoate + H(+). It carries out the reaction 1-hexadecanoyl-2-(9Z,12Z-octadecadienoyl)-sn-glycero-3-phosphoethanolamine + H2O = 1-hexadecanoyl-sn-glycero-3-phosphoethanolamine + (9Z,12Z)-octadecadienoate + H(+). It catalyses the reaction 1-hexadecanoyl-sn-glycero-3-phosphocholine + H2O = sn-glycerol 3-phosphocholine + hexadecanoate + H(+). Its pathway is lipid metabolism; fatty acid metabolism. With respect to regulation, stimulated by cytosolic Ca(2+). Its function is as follows. Calcium-dependent phospholipase A2 that selectively hydrolyzes glycerophospholipids in the sn-2 position. Compared to its human ortholog, may have no preference for the fatty acid found at the sn-2 position. This is Cytosolic phospholipase A2 delta from Mus musculus (Mouse).